A 285-amino-acid polypeptide reads, in one-letter code: Tyrosine recombinase XerA (285 aa).

The 78-residue stretch at 7–84 folds into the Core-binding (CB) domain; that stretch reads IVNSDILEEF…ALKSYFKFEG (78 aa). Residues 100–274 enclose the Tyr recombinase domain; the sequence is SLPKSLTEDE…TTKHLREAIE (175 aa). Residues Arg135, Lys160, His226, Arg229, and His252 contribute to the active site. Tyr261 (O-(3'-phospho-DNA)-tyrosine intermediate) is an active-site residue.

Belongs to the 'phage' integrase family. XerA subfamily.

The protein resides in the cytoplasm. In terms of biological role, site-specific tyrosine recombinase, which acts by catalyzing the cutting and rejoining of the recombining DNA molecules. This chain is Tyrosine recombinase XerA, found in Pyrococcus horikoshii (strain ATCC 700860 / DSM 12428 / JCM 9974 / NBRC 100139 / OT-3).